Reading from the N-terminus, the 217-residue chain is 5'-methylthioadenosine/S-adenosylhomocysteine nucleosidase (217 aa).

Glutamate 11 acts as the Proton acceptor in catalysis. Substrate contacts are provided by residues glycine 77, valine 139, and 159–160; that span reads MD. Residue aspartate 183 is the Proton donor of the active site.

Belongs to the PNP/UDP phosphorylase family. MtnN subfamily.

The catalysed reaction is S-adenosyl-L-homocysteine + H2O = S-(5-deoxy-D-ribos-5-yl)-L-homocysteine + adenine. The enzyme catalyses S-methyl-5'-thioadenosine + H2O = 5-(methylsulfanyl)-D-ribose + adenine. It carries out the reaction 5'-deoxyadenosine + H2O = 5-deoxy-D-ribose + adenine. It participates in amino-acid biosynthesis; L-methionine biosynthesis via salvage pathway; S-methyl-5-thio-alpha-D-ribose 1-phosphate from S-methyl-5'-thioadenosine (hydrolase route): step 1/2. Its function is as follows. Catalyzes the irreversible cleavage of the glycosidic bond in both 5'-methylthioadenosine (MTA) and S-adenosylhomocysteine (SAH/AdoHcy) to adenine and the corresponding thioribose, 5'-methylthioribose and S-ribosylhomocysteine, respectively. Also cleaves 5'-deoxyadenosine, a toxic by-product of radical S-adenosylmethionine (SAM) enzymes, into 5-deoxyribose and adenine. This is 5'-methylthioadenosine/S-adenosylhomocysteine nucleosidase (mtnN) from Thermotoga maritima (strain ATCC 43589 / DSM 3109 / JCM 10099 / NBRC 100826 / MSB8).